Consider the following 836-residue polypeptide: Protein translocase subunit SecA (836 aa).

ATP is bound by residues glutamine 85, glycine 103–threonine 107, and aspartate 492. Positions arginine 786–asparagine 817 are disordered. Positions aspartate 801–arginine 816 are enriched in basic and acidic residues. Cysteine 820, cysteine 822, cysteine 831, and cysteine 832 together coordinate Zn(2+).

It belongs to the SecA family. In terms of assembly, monomer and homodimer. Part of the essential Sec protein translocation apparatus which comprises SecA, SecYEG and auxiliary proteins SecDF. Other proteins may also be involved. Zn(2+) serves as cofactor.

Its subcellular location is the cell membrane. It localises to the cytoplasm. It catalyses the reaction ATP + H2O + cellular proteinSide 1 = ADP + phosphate + cellular proteinSide 2.. Its function is as follows. Part of the Sec protein translocase complex. Interacts with the SecYEG preprotein conducting channel. Has a central role in coupling the hydrolysis of ATP to the transfer of proteins into and across the cell membrane, serving as an ATP-driven molecular motor driving the stepwise translocation of polypeptide chains across the membrane. This Clostridium tetani (strain Massachusetts / E88) protein is Protein translocase subunit SecA.